Consider the following 227-residue polypeptide: uncharacterized protein (227 aa).

The helical transmembrane segment at 7-26 (IITLTILIFISGLLTAFLLL) threads the bilayer.

Its subcellular location is the membrane. This is an uncharacterized protein from Haemophilus influenzae (strain ATCC 51907 / DSM 11121 / KW20 / Rd).